Reading from the N-terminus, the 226-residue chain is V-type proton ATPase subunit E (226 aa).

It belongs to the V-ATPase E subunit family. In terms of assembly, V-ATPase is a heteromultimeric enzyme made up of two complexes: the ATP-hydrolytic V1 complex and the proton translocation V0 complex. The V1 complex consists of three catalytic AB heterodimers that form a heterohexamer, three peripheral stalks each consisting of EG heterodimers, one central rotor including subunits D and F, and the regulatory subunits C and H. The proton translocation complex V0 consists of the proton transport subunit a, a ring of proteolipid subunits c9c'', rotary subunit d, subunits e and f, and the accessory subunits VhaAC45 and ATP6AP2.

Subunit of the V1 complex of vacuolar(H+)-ATPase (V-ATPase), a multisubunit enzyme composed of a peripheral complex (V1) that hydrolyzes ATP and a membrane integral complex (V0) that translocates protons. V-ATPase is responsible for acidifying and maintaining the pH of intracellular compartments and in some cell types, is targeted to the plasma membrane, where it is responsible for acidifying the extracellular environment. The sequence is that of V-type proton ATPase subunit E (VHA26) from Manduca sexta (Tobacco hawkmoth).